Here is a 597-residue protein sequence, read N- to C-terminus: Nucleolar protein 58 (597 aa).

Residues 285-410 (IAPNMTELVG…LENNLRQLEG (126 aa)) enclose the Nop domain. The disordered stretch occupies residues 452 to 597 (AEAPKKPLIQ…KKKKKKSSKE (146 aa)). Residues 482-499 (KSKKDKKEKKEKKDKKAK) show a composition bias toward basic residues. The span at 532–551 (IKEDGTLEILSKKDFKGKDA) shows a compositional bias: basic and acidic residues. Over residues 552-561 (EAEEEAEEEE) the composition is skewed to acidic residues. Residues 588 to 597 (KKKKKKSSKE) are compositionally biased toward basic residues.

This sequence belongs to the NOP5/NOP56 family.

It is found in the nucleus. It localises to the nucleolus. Required for pre-18S rRNA processing. May bind microtubules. The polypeptide is Nucleolar protein 58 (nop-58) (Neurospora crassa (strain ATCC 24698 / 74-OR23-1A / CBS 708.71 / DSM 1257 / FGSC 987)).